The primary structure comprises 309 residues: Xylose/arabinose import permease protein XacI (309 aa).

Helical transmembrane passes span 29–49 (LVVF…MTAI), 89–109 (LIMS…AAYG), 121–141 (MLML…VPLA), 170–190 (ELVP…TILF), 227–247 (MFGV…LFAF), and 282–302 (AAFL…EQFA). The 213-residue stretch at 85–297 (FFNSLIMSIP…VPTLILYVAF (213 aa)) folds into the ABC transmembrane type-1 domain.

Belongs to the binding-protein-dependent transport system permease family. As to quaternary structure, the complex is composed of two ATP-binding proteins (XacJ and XacK), two transmembrane proteins (XacH and XacI) and a solute-binding protein (XacG).

It localises to the cell membrane. In terms of biological role, part of the ABC transporter complex XacGHIJK involved in the uptake of xylose and arabinose. Responsible for the translocation of the substrate across the membrane. The sequence is that of Xylose/arabinose import permease protein XacI from Haloferax volcanii (strain ATCC 29605 / DSM 3757 / JCM 8879 / NBRC 14742 / NCIMB 2012 / VKM B-1768 / DS2) (Halobacterium volcanii).